Reading from the N-terminus, the 339-residue chain is NmrA-like family domain-containing oxidoreductase notA (339 aa).

NADP(+) contacts are provided by residues 13–18 (GATGAQ), 39–43 (RKPDS), 60–61 (DG), 81–83 (TNS), K140, and 164–167 (YMGI).

The protein belongs to the NmrA-type oxidoreductase family.

Functionally, nmrA-like family domain-containing oxidoreductase; part of the gene cluster that mediates the biosynthesis of notoamide, a fungal indole alkaloid that belongs to a family of natural products containing a characteristic bicyclo[2.2.2]diazaoctane core. The first step of notoamide biosynthesis involves coupling of L-proline and L-tryptophan by the bimodular NRPS notE, to produce cyclo-L-tryptophan-L-proline called brevianamide F. The reverse prenyltransferase notF then acts as a deoxybrevianamide E synthase and converts brevianamide F to deoxybrevianamide E via reverse prenylation at C-2 of the indole ring leading to the bicyclo[2.2.2]diazaoctane core. Deoxybrevianamide E is further hydroxylated at C-6 of the indole ring, likely catalyzed by the cytochrome P450 monooxygenase notG, to yield 6-hydroxy-deoxybrevianamide E. 6-hydroxy-deoxybrevianamide E is a specific substrate of the prenyltransferase notC for normal prenylation at C-7 to produce 6-hydroxy-7-prenyl-deoxybrevianamide, also called notoamide S. As the proposed pivotal branching point in notoamide biosynthesis, notoamide S can be diverted to notoamide E through an oxidative pyran ring closure putatively catalyzed by either notH cytochrome P450 monooxygenase or the notD FAD-linked oxidoreductase. This step would be followed by an indole 2,3-epoxidation-initiated pinacol-like rearrangement catalyzed by the notB FAD-dependent monooxygenase leading to the formation of notoamide C and notoamide D. On the other hand notoamide S is converted to notoamide T by notH (or notD), a bifunctional oxidase that also functions as the intramolecular Diels-Alderase responsible for generation of (+)-notoamide T. To generate antipodal (-)-notoaminide T, notH' (or notD') in Aspergillus versicolor is expected to catalyze a Diels-Alder reaction leading to the opposite stereochemistry. The remaining oxidoreductase notD (or notH) likely catalyzes the oxidative pyran ring formation to yield (+)-stephacidin A. The FAD-dependent monooxygenase notI is highly similar to notB and is predicted to catalyze a similar conversion from (+)-stephacidin A to (-)-notoamide B via the 2,3-epoxidation of (+)-stephacidin A followed by a pinacol-type rearrangement. Finally, it remains unclear which enzyme could be responsible for the final hydroxylation steps leading to notoamide A and sclerotiamide. This chain is NmrA-like family domain-containing oxidoreductase notA, found in Aspergillus sp. (strain MF297-2).